Consider the following 229-residue polypeptide: Translin (229 aa).

The segment at 86-90 (RFHEH) is DNA/RNA binding. The leucine-zipper stretch occupies residues 177-198 (LDSGFRLLNLKNDSLRKRYDGL).

The protein belongs to the translin family. In terms of assembly, ring-shaped heterooctamer of six TSN and two TSNAX subunits, DNA/RNA binding occurs inside the ring.

Its subcellular location is the cytoplasm. It localises to the nucleus. In terms of biological role, exhibits both single-stranded and double-stranded endoribonuclease activity. May act as an activator of RNA-induced silencing complex (RISC) by facilitating endonucleolytic cleavage of the siRNA passenger strand. Its function is as follows. DNA-binding protein that specifically recognizes consensus sequences at the breakpoint junctions in chromosomal translocations, mostly involving immunoglobulin (Ig)/T-cell receptor gene segments. Seems to recognize single-stranded DNA ends generated by staggered breaks occurring at recombination hot spots. This is Translin (TSN) from Gallus gallus (Chicken).